The sequence spans 1851 residues: MQYHQHQHQFPGPGPSHTSVYSSDGFSCSMESIPLPEHLQQRNPPMEEHYLQQTILPTRVPESTVAKAREIVLSHITSQEHLPWDTFRLLPPKADRHQKDTLYNGFLQVLKMITFVALFVTTLGSSILAKLSLLVMAAGLGQAGHNISICPDKIPESPKNSVLISPKNAAKWAWALLLAICIPELLCFARSLHRSLFRKVRGPSFLQFLLVFTVESVHAFGLGALVFAIMPRGMVITMLQLGNSLCLIPSLLLPLSRSRSRWLPLLLLLDGSAILAQSSAAIWRGSIPLERFGFVFLCTSLISIAWWQNFVHPHSFLPATRFFAHYAAKLRECRSKTFVVLSPWKCLIFTFCMFQFVPPQIPFRELLQKDPFGEKLVTINAYNLNQSQLNAFQERMENLERKAFHQQHPHIVHPLKLNRKIVENIANGEAALFRNGTRRPPKKEEVKKNKMDSKKKTKKLKKKKGGNNNATSTNSSEKTPTKGGVLPTKRERRTMAATGSNERVEADYSSNSDADEQEEEEENVAAYNIYDDRVELNQFTTANDALWLVFVQAGSVLLCQLCAKFACKVVMQRVGLALPVVLSIPFGILFLAYSCRQKATNPCHLSEWMSKELFWQCPTRPFHWQRFFREQPNLLWLCWWLSQCWITIHLWLPRQERLAKSEKLFVLGYIDAPFPEHSIALDRRRDDKIQIRSEDIDTEEEANEGGGEQEDGNSSTHTCESAASGLVVVEAPFPKHPNVGRPTAASICSNGSLSSGSHRSDDGGLIRELPSSADSVCKIYVCATMWHESALEMGCMLKSIFRLDKDQCARRNAQRYLKVVDPDYYVFEAHIYIDDAFELDENGNPHPNKFVHQLLEKMDEAASTKLQLRTPRICVTSYGGRISYVLPWRNRLSIHLKNKLLIRQRKRWSQVMYLYFLLGFRLMLRVHEQKRRELLAENTFILTLDGDVDFQPECVHLLVDLMRKNRRLGAACGRIHPRGSGLMVWYQKFEYAVGHWLQKATEHMIGCVLCSPGCFSLFRSSALIDDNVARKYATKSEKPFHYVQYDQGEDRWLCTLLLQRGYRVEYCAASDALTFAPEGFSEFFNQRRRWIPSTMANVIDLLRDYRNVVRVNDSVSIWYIAYQLVMLFSSVLGPGTIFLMIVGAISISFNIDTRLALLIVTTPVLCFCVCCLTCGTETQLLLAQVIGALFAMLMTAVIVGTSLQIQKDGLLSPHSIFLFTVLGSWSFSALLHPLEFGCLLPCGLYFLAIPCMYMLLPVYSLCNLNTVSWGTRENASVSSSSTGQFSGKREERGDILPHLQKTEDGELSVGCGNFCRVVCCVRNPSSPPCADETVEVRKLDENFRKIERKLQSLERRTNGQGNNAEEEGKEEEETGKSEQERKEGREEGKEEEGKMSKRKKEEMDLKGWMELEPFRRFEPIVLDTEEESFWREMIEKYLRPILPNSNEQARIQRGLNELRNTCCSAFFMVNIVFIIVVLVLQLQKDCLHIEWPLGPLVNQTRVQCGGGGGRDFEGEEWIMSRLQLEPMGFVFIVFFLIILFIQFLAMLFHRFGTFTHIIASTELCCAQRPLDKLSEEELVAQNAVEIVRELQAIRGIDSSLSRSEQFQQQPLQRQTRQHFPRTLSLGKRQQNAQIPPRCEKGGNERGEESPTSLPAPPVINWSEVHRNHQRVQPMEGGQQFDPRKDTLDAAFRQRFFALSSSSIAADHHQNNGGHLVDTTGTGHIGAAALPLTLNRRTLRALEQRRNILYQRGDRKRIPALNQQFHSIFPSSSESEGEEGEGGGRGRGREQERDKCLEGKKEKFRQRVEEGPARCHRLEELFGKSRKGGPQKRGKVNGENMKFLGTTNKRAK.

A disordered region spans residues Met-1–Tyr-21. At Met-1 to Gln-108 the chain is on the cytoplasmic side. Residues Val-109–Ala-129 traverse the membrane as a helical segment. At Lys-130–Asn-168 the chain is on the extracellular side. N-linked (GlcNAc...) asparagine glycosylation occurs at Asn-146. Residues Ala-169–Ala-189 traverse the membrane as a helical segment. Residues Arg-190 to Phe-208 are Cytoplasmic-facing. The chain crosses the membrane as a helical span at residues Leu-209 to Ile-229. Residues Met-230–Met-234 are Extracellular-facing. A helical membrane pass occupies residues Val-235 to Leu-255. Topologically, residues Ser-256–Arg-261 are cytoplasmic. Residues Trp-262–Ile-282 form a helical membrane-spanning segment. The Extracellular segment spans residues Trp-283 to Arg-291. The chain crosses the membrane as a helical span at residues Phe-292–His-312. Over Pro-313–Thr-337 the chain is Cytoplasmic. The chain crosses the membrane as a helical span at residues Phe-338–Pro-358. Over Pro-359–Asp-544 the chain is Extracellular. Asn-385 and Asn-435 each carry an N-linked (GlcNAc...) asparagine glycan. Residues Leu-432–Glu-522 form a disordered region. The segment covering Lys-442–Lys-454 has biased composition (basic and acidic residues). Over residues Lys-455–Gly-465 the composition is skewed to basic residues. Positions Gly-466 to Lys-478 are enriched in low complexity. Residues Asn-469 and Asn-474 are each glycosylated (N-linked (GlcNAc...) asparagine). Residues Asp-513 to Glu-522 show a composition bias toward acidic residues. The helical transmembrane segment at Ala-545–Phe-565 threads the bilayer. At Ala-566–Arg-573 the chain is on the cytoplasmic side. Residues Val-574–Ser-594 form a helical membrane-spanning segment. Over Cys-595–Gln-631 the chain is Extracellular. A helical transmembrane segment spans residues Pro-632–Leu-652. Residues Pro-653–Leu-1124 are Cytoplasmic-facing. The disordered stretch occupies residues Ser-693–Thr-718. Positions Ile-696–Asp-711 are enriched in acidic residues. The chain crosses the membrane as a helical span at residues Val-1125–Ile-1145. Residues Ser-1146–Arg-1154 lie on the Extracellular side of the membrane. The chain crosses the membrane as a helical span at residues Leu-1155–Gly-1175. Residues Thr-1176 to Gln-1179 are Cytoplasmic-facing. A helical transmembrane segment spans residues Leu-1180 to Gly-1200. The Extracellular segment spans residues Thr-1201 to Gly-1209. A helical membrane pass occupies residues Leu-1210 to Leu-1230. At Leu-1231–Glu-1235 the chain is on the cytoplasmic side. Residues Phe-1236–Leu-1256 form a helical membrane-spanning segment. Residues Pro-1257–Thr-1461 lie on the Extracellular side of the membrane. Asn-1274 is a glycosylation site (N-linked (GlcNAc...) asparagine). The stretch at Cys-1329–Glu-1383 forms a coiled coil. Residues Leu-1350–Glu-1402 form a disordered region. Residues Ala-1364–Glu-1373 show a composition bias toward acidic residues. The segment covering Thr-1374 to Glu-1402 has biased composition (basic and acidic residues). The chain crosses the membrane as a helical span at residues Cys-1462–Leu-1482. The Cytoplasmic segment spans residues Gln-1483–Met-1527. Residues Gly-1528–Phe-1548 form a helical membrane-spanning segment. The Extracellular segment spans residues His-1549 to Lys-1851. The tract at residues Gly-1626–Val-1658 is disordered. Residues Arg-1637–Glu-1648 are compositionally biased toward basic and acidic residues. N-linked (GlcNAc...) asparagine glycosylation occurs at Asn-1660. The interval His-1765–Lys-1851 is disordered. A compositionally biased stretch (basic and acidic residues) spans Gly-1781–Gly-1822. The segment covering Lys-1823–Lys-1834 has biased composition (basic residues).

The protein belongs to the chitin synthase family. Class IV subfamily. May require proteolytic cleavage for activation.

It is found in the cell membrane. The catalysed reaction is [(1-&gt;4)-N-acetyl-beta-D-glucosaminyl](n) + UDP-N-acetyl-alpha-D-glucosamine = [(1-&gt;4)-N-acetyl-beta-D-glucosaminyl](n+1) + UDP + H(+). Required for the synthesis of chitin. The protein is Chitin synthase of Meloidogyne artiellia (British root-knot nematode).